The following is a 291-amino-acid chain: 4-hydroxy-tetrahydrodipicolinate synthase (291 aa).

Threonine 44 contacts pyruvate. Residue tyrosine 132 is the Proton donor/acceptor of the active site. The active-site Schiff-base intermediate with substrate is lysine 160. Isoleucine 202 contributes to the pyruvate binding site.

This sequence belongs to the DapA family. In terms of assembly, homotetramer; dimer of dimers.

It is found in the cytoplasm. It carries out the reaction L-aspartate 4-semialdehyde + pyruvate = (2S,4S)-4-hydroxy-2,3,4,5-tetrahydrodipicolinate + H2O + H(+). It participates in amino-acid biosynthesis; L-lysine biosynthesis via DAP pathway; (S)-tetrahydrodipicolinate from L-aspartate: step 3/4. In terms of biological role, catalyzes the condensation of (S)-aspartate-beta-semialdehyde [(S)-ASA] and pyruvate to 4-hydroxy-tetrahydrodipicolinate (HTPA). The sequence is that of 4-hydroxy-tetrahydrodipicolinate synthase from Syntrophus aciditrophicus (strain SB).